Reading from the N-terminus, the 211-residue chain is Outer-membrane lipoprotein carrier protein (211 aa).

Positions 1 to 25 (MRAIRMLLVSALTLGSLSATLSAHA) are cleaved as a signal peptide.

Belongs to the LolA family. Monomer.

The protein localises to the periplasm. Participates in the translocation of lipoproteins from the inner membrane to the outer membrane. Only forms a complex with a lipoprotein if the residue after the N-terminal Cys is not an aspartate (The Asp acts as a targeting signal to indicate that the lipoprotein should stay in the inner membrane). This chain is Outer-membrane lipoprotein carrier protein, found in Pseudomonas putida (strain W619).